The chain runs to 219 residues: 3,4-dihydroxy-2-butanone 4-phosphate synthase (219 aa).

Residues 37–38 (RE), aspartate 42, 150–154 (RRGHT), and glutamate 174 each bind D-ribulose 5-phosphate. Glutamate 38 contacts Mg(2+). Mg(2+) is bound at residue histidine 153.

The protein belongs to the DHBP synthase family. In terms of assembly, homodimer. Mg(2+) serves as cofactor. It depends on Mn(2+) as a cofactor.

The enzyme catalyses D-ribulose 5-phosphate = (2S)-2-hydroxy-3-oxobutyl phosphate + formate + H(+). The protein operates within cofactor biosynthesis; riboflavin biosynthesis; 2-hydroxy-3-oxobutyl phosphate from D-ribulose 5-phosphate: step 1/1. Its function is as follows. Catalyzes the conversion of D-ribulose 5-phosphate to formate and 3,4-dihydroxy-2-butanone 4-phosphate. This chain is 3,4-dihydroxy-2-butanone 4-phosphate synthase, found in Edwardsiella ictaluri (strain 93-146).